Consider the following 37-residue polypeptide: Large ribosomal subunit protein bL36 (37 aa).

This sequence belongs to the bacterial ribosomal protein bL36 family.

This Rippkaea orientalis (strain PCC 8801 / RF-1) (Cyanothece sp. (strain PCC 8801)) protein is Large ribosomal subunit protein bL36.